The sequence spans 350 residues: Lipase chaperone (350 aa).

The chain crosses the membrane as a helical span at residues 12-32 (IVLYLILGCVVVCGVWYSFDV).

This sequence belongs to the lipase chaperone family.

It is found in the cell inner membrane. May be involved in the folding of the extracellular lipase during its passage through the periplasm. In Xylella fastidiosa (strain 9a5c), this protein is Lipase chaperone (lifO).